Consider the following 140-residue polypeptide: Probable disulfide formation protein C 2 (140 aa).

A helical membrane pass occupies residues 6 to 25 (KYHIAIAWTIATSAMLISLI). C35 and C38 are oxidised to a cystine. 2 helical membrane-spanning segments follow: residues 40-59 (YQRM…MYRK) and 66-83 (YAFP…YQIT). Residues C95 and C101 are joined by a disulfide bond. Residues 110 to 134 (GFISIPMLSFVGFLAIIILLYINQI) traverse the membrane as a helical segment.

It belongs to the DsbB family. BdbC subfamily.

The protein localises to the cell membrane. Required for disulfide bond formation in some proteins. The chain is Probable disulfide formation protein C 2 (bdbC2) from Bacillus anthracis.